A 178-amino-acid chain; its full sequence is Transcriptional repressor NrdR (178 aa).

The segment at 1–21 (MRCPFCGHEDTQVKDSRPHED) is disordered. The segment at 3 to 34 (CPFCGHEDTQVKDSRPHEDGAAIRRRRICAAC) is a zinc-finger region. Positions 7–21 (GHEDTQVKDSRPHED) are enriched in basic and acidic residues. In terms of domain architecture, ATP-cone spans 49-139 (LYVVKADDRR…VHWDFRETKD (91 aa)).

It belongs to the NrdR family. Zn(2+) serves as cofactor.

Functionally, negatively regulates transcription of bacterial ribonucleotide reductase nrd genes and operons by binding to NrdR-boxes. This is Transcriptional repressor NrdR from Gluconacetobacter diazotrophicus (strain ATCC 49037 / DSM 5601 / CCUG 37298 / CIP 103539 / LMG 7603 / PAl5).